Here is a 242-residue protein sequence, read N- to C-terminus: Venom nerve growth factor 2 (242 aa).

Residues 1–18 form the signal peptide; that stretch reads MSMLCYTLIIAFLIGIWA. The propeptide occupies 19 to 125; the sequence is APQSEDNVPL…ALNRNIQAKR (107 aa). Residues 47 to 66 are compositionally biased toward basic and acidic residues; it reads DLKTSRNTDQRHPAPKKADD. The interval 47 to 70 is disordered; it reads DLKTSRNTDQRHPAPKKADDQELG. Disulfide bonds link cysteine 139–cysteine 203, cysteine 181–cysteine 231, and cysteine 191–cysteine 233.

Belongs to the NGF-beta family. As to quaternary structure, homodimer; non-covalently linked. In terms of tissue distribution, expressed by the venom gland.

The protein localises to the secreted. Nerve growth factor is important for the development and maintenance of the sympathetic and sensory nervous systems. It stimulates division and differentiation of sympathetic and embryonic sensory neurons as well as basal forebrain cholinergic neurons in the brain. Its relevance in the snake venom is not clear. However, it has been shown to inhibit metalloproteinase-dependent proteolysis of platelet glycoprotein Ib alpha, suggesting a metalloproteinase inhibition to prevent metalloprotease autodigestion and/or protection against prey proteases. Binds a lipid between the two protein chains in the homodimer. The lipid-bound form promotes histamine relase from mouse mast cells, contrary to the lipid-free form. This is Venom nerve growth factor 2 from Pseudechis australis (Mulga snake).